The primary structure comprises 197 residues: Putative peptidyl-prolyl cis-trans isomerase (197 aa).

The PPIase cyclophilin-type domain maps to 14 to 195 (GEIKVVMHTN…HDVVIESIDV (182 aa)).

The protein belongs to the cyclophilin-type PPIase family.

The catalysed reaction is [protein]-peptidylproline (omega=180) = [protein]-peptidylproline (omega=0). PPIases accelerate the folding of proteins. It catalyzes the cis-trans isomerization of proline imidic peptide bonds in oligopeptides. In Staphylococcus aureus (strain COL), this protein is Putative peptidyl-prolyl cis-trans isomerase.